A 474-amino-acid polypeptide reads, in one-letter code: Membrane-bound acylglycerophosphatidylinositol O-acyltransferase mboat7 (474 aa).

At 1–5 (MSPNE) the chain is on the cytoplasmic side. A helical transmembrane segment spans residues 6–22 (LTYLAILLGSAPLGFLF). Residues 23-33 (KNGSPQVKQRG) lie on the Lumenal side of the membrane. The chain crosses the membrane as a helical span at residues 34-57 (SAAVGVALTLITCHIHSLHSAITI). At 58–73 (LGTWLIIKILPRSCHF) the chain is on the cytoplasmic side. The helical transmembrane segment at 74 to 93 (PTLGWTFTYLLFFRTITYFD) threads the bilayer. Topologically, residues 94-193 (IPAPTPFTNA…IPSWKPLVSR (100 aa)) are lumenal. Residues 194–211 (LKPAPVFGVLFLIASQYF) traverse the membrane as a helical segment. Residues 212–230 (PLDYVKTDEFYEQAFLYRL) are Cytoplasmic-facing. The chain crosses the membrane as a helical span at residues 231-260 (FYMVPTFFIFRMRFYVAWIFAECGCISAAF). The Lumenal segment spans residues 261–427 (GAYPVSAKSR…LTFTDTYRYW (167 aa)). The N-linked (GlcNAc...) asparagine glycan is linked to N322. Residues 428–448 (QSIYFSVHVLAISLFLLGRVL) traverse the membrane as a helical segment. At 449–473 (ALKSPRRPRNTKEEKAEAKQENRLQ) the chain is on the cytoplasmic side.

This sequence belongs to the membrane-bound acyltransferase family.

The protein resides in the endoplasmic reticulum membrane. The catalysed reaction is a 1-acyl-sn-glycero-3-phospho-(1D-myo-inositol) + (5Z,8Z,11Z,14Z)-eicosatetraenoyl-CoA = a 1-acyl-2-(5Z,8Z,11Z,14Z-eicosatetraenoyl)-sn-glycero-3-phospho-(1D-myo-inositol) + CoA. It catalyses the reaction (5Z,8Z,11Z,14Z)-eicosatetraenoyl-CoA + 1-hexadecanoyl-sn-glycero-3-phosphocholine = 1-hexadecanoyl-2-(5Z,8Z,11Z,14Z-eicosatetraenoyl)-sn-glycero-3-phosphocholine + CoA. It carries out the reaction a 1-acyl-sn-glycero-3-phospho-(1D-myo-inositol) + an acyl-CoA = a 1,2-diacyl-sn-glycero-3-phospho-(1D-myo-inositol) + CoA. The enzyme catalyses 1-octadecanoyl-sn-glycero-3-phospho-(1D-myo-inositol) + (5Z,8Z,11Z,14Z)-eicosatetraenoyl-CoA = 1-octadecanoyl-2-(5Z,8Z,11Z,14Z-eicosatetraenoyl)-sn-glycero-3-phospho-(1D-myo-inositol) + CoA. It functions in the pathway lipid metabolism; phospholipid metabolism. Its function is as follows. Acyltransferase which catalyzes the transfer of an acyl group from an acyl-CoA to a lysophosphatidylinositol (1-acylglycerophosphatidylinositol or LPI) leading to the production of a phosphatidylinositol (1,2-diacyl-sn-glycero-3-phosphoinositol or PI) and participates in the reacylation step of the phospholipid remodeling pathway also known as the Lands cycle. Prefers arachidonoyl-CoA as the acyl donor, thus contributing to the regulation of free levels arachidonic acid in cell. The protein is Membrane-bound acylglycerophosphatidylinositol O-acyltransferase mboat7 (mboat7) of Xenopus laevis (African clawed frog).